A 78-amino-acid chain; its full sequence is NEDD8-like protein RUB3 (78 aa).

Glycine 76 participates in a covalent cross-link: Glycyl lysine isopeptide (Gly-Lys) (interchain with K-? in acceptor proteins). The propeptide occupies 77 to 78 (CC).

Detected in stems and flower buds, but not in leaves, mature flowers and seedlings.

In terms of biological role, may function as a stable post-translational protein modifier. The polypeptide is NEDD8-like protein RUB3 (RUB3) (Arabidopsis thaliana (Mouse-ear cress)).